The sequence spans 252 residues: Hydroxyacylglutathione hydrolase (252 aa).

Residues His54, His56, Asp58, His59, His111, Asp128, and His166 each contribute to the Zn(2+) site.

Belongs to the metallo-beta-lactamase superfamily. Glyoxalase II family. As to quaternary structure, monomer. Requires Zn(2+) as cofactor.

The catalysed reaction is an S-(2-hydroxyacyl)glutathione + H2O = a 2-hydroxy carboxylate + glutathione + H(+). Its pathway is secondary metabolite metabolism; methylglyoxal degradation; (R)-lactate from methylglyoxal: step 2/2. Its function is as follows. Thiolesterase that catalyzes the hydrolysis of S-D-lactoyl-glutathione to form glutathione and D-lactic acid. The chain is Hydroxyacylglutathione hydrolase from Aliivibrio fischeri (strain MJ11) (Vibrio fischeri).